Reading from the N-terminus, the 490-residue chain is Ribulose bisphosphate carboxylase large chain (490 aa).

Substrate contacts are provided by asparagine 127 and threonine 177. Lysine 179 functions as the Proton acceptor in the catalytic mechanism. Lysine 181 contacts substrate. Mg(2+) is bound by residues lysine 205, aspartate 207, and glutamate 208. N6-carboxylysine is present on lysine 205. The active-site Proton acceptor is histidine 297. The substrate site is built by arginine 298, histidine 330, and serine 382.

Belongs to the RuBisCO large chain family. Type I subfamily. In terms of assembly, heterohexadecamer of 8 large chains and 8 small chains. It depends on Mg(2+) as a cofactor.

Its subcellular location is the plastid. It localises to the chloroplast. It catalyses the reaction 2 (2R)-3-phosphoglycerate + 2 H(+) = D-ribulose 1,5-bisphosphate + CO2 + H2O. The enzyme catalyses D-ribulose 1,5-bisphosphate + O2 = 2-phosphoglycolate + (2R)-3-phosphoglycerate + 2 H(+). In terms of biological role, ruBisCO catalyzes two reactions: the carboxylation of D-ribulose 1,5-bisphosphate, the primary event in carbon dioxide fixation, as well as the oxidative fragmentation of the pentose substrate in the photorespiration process. Both reactions occur simultaneously and in competition at the same active site. The protein is Ribulose bisphosphate carboxylase large chain of Thalassiosira nordenskioeldii (Marine diatom).